The sequence spans 92 residues: C-C motif chemokine 4 (92 aa).

The first 23 residues, 1–23 (MKLCVTVLSLLVLVAAFCSPALS), serve as a signal peptide directing secretion. Disulfide bonds link cysteine 34-cysteine 58 and cysteine 35-cysteine 74.

Belongs to the intercrine beta (chemokine CC) family. As to quaternary structure, homodimer. Interacts with CCR5.

It localises to the secreted. In terms of biological role, monokine with inflammatory and chemokinetic properties. In Sus scrofa (Pig), this protein is C-C motif chemokine 4 (CCL4).